We begin with the raw amino-acid sequence, 201 residues long: Peptide deformylase (201 aa).

The interval 1 to 34 is disordered; sequence MSLNFAAMARQSERQASTVMVPKGEEQPESPKIH. Residues 23–32 are compositionally biased toward basic and acidic residues; that stretch reads KGEEQPESPK. Residues cysteine 121 and histidine 163 each contribute to the Fe cation site. The active site involves glutamate 164. Residue histidine 167 participates in Fe cation binding.

The protein belongs to the polypeptide deformylase family. The cofactor is Fe(2+).

The catalysed reaction is N-terminal N-formyl-L-methionyl-[peptide] + H2O = N-terminal L-methionyl-[peptide] + formate. In terms of biological role, removes the formyl group from the N-terminal Met of newly synthesized proteins. Requires at least a dipeptide for an efficient rate of reaction. N-terminal L-methionine is a prerequisite for activity but the enzyme has broad specificity at other positions. This Synechococcus sp. (strain RCC307) protein is Peptide deformylase.